The following is a 425-amino-acid chain: Bifunctional phosphoribosylaminoimidazole carboxylase/phosphoribosylaminoimidazole succinocarboxamide synthetase (425 aa).

A2 carries the post-translational modification N-acetylalanine. An SAICAR synthetase domain region spans residues 2 to 260 (ATAEVLNIGR…WVADRVELLL (259 aa)). Position 22 is a phosphotyrosine (Y22). The residue at position 27 (S27) is a Phosphoserine. The residue at position 36 (K36) is an N6-acetyllysine. S107 carries the post-translational modification Phosphoserine. The residue at position 238 (T238) is a Phosphothreonine. K247 carries the N6-acetyllysine modification. The segment at 261-266 (KSNSQC) is linker. The tract at residues 267–425 (RVVVLMGSTS…ADKKIRECNL (159 aa)) is AIR carboxylase domain. Phosphoserine is present on S274. S332 is a CO2 binding site.

The protein in the N-terminal section; belongs to the SAICAR synthetase family. In the C-terminal section; belongs to the AIR carboxylase family. Class II subfamily. In terms of assembly, homooctamer.

The catalysed reaction is 5-amino-1-(5-phospho-D-ribosyl)imidazole-4-carboxylate + L-aspartate + ATP = (2S)-2-[5-amino-1-(5-phospho-beta-D-ribosyl)imidazole-4-carboxamido]succinate + ADP + phosphate + 2 H(+). It carries out the reaction 5-amino-1-(5-phospho-D-ribosyl)imidazole-4-carboxylate + H(+) = 5-amino-1-(5-phospho-beta-D-ribosyl)imidazole + CO2. Its pathway is purine metabolism; IMP biosynthesis via de novo pathway; 5-amino-1-(5-phospho-D-ribosyl)imidazole-4-carboxamide from 5-amino-1-(5-phospho-D-ribosyl)imidazole-4-carboxylate: step 1/2. It functions in the pathway purine metabolism; IMP biosynthesis via de novo pathway; 5-amino-1-(5-phospho-D-ribosyl)imidazole-4-carboxylate from 5-amino-1-(5-phospho-D-ribosyl)imidazole (carboxylase route): step 1/1. Bifunctional phosphoribosylaminoimidazole carboxylase and phosphoribosylaminoimidazole succinocarboxamide synthetase catalyzing two reactions of the de novo purine biosynthetic pathway. The sequence is that of Bifunctional phosphoribosylaminoimidazole carboxylase/phosphoribosylaminoimidazole succinocarboxamide synthetase from Rattus norvegicus (Rat).